The sequence spans 185 residues: Regulator of rDNA transcription protein 13 (185 aa).

WD repeat units lie at residues 9-48, 71-108, and 111-148; these read GHTD…NNGE, GHRA…LKHF, and HTQL…LVRS.

May be involved in the modulation of rDNA transcription. The chain is Regulator of rDNA transcription protein 13 (RRT13) from Saccharomyces cerevisiae (strain ATCC 204508 / S288c) (Baker's yeast).